The primary structure comprises 251 residues: Cell division protein ZapD (251 aa).

This sequence belongs to the ZapD family. As to quaternary structure, interacts with FtsZ.

The protein localises to the cytoplasm. Its function is as follows. Cell division factor that enhances FtsZ-ring assembly. Directly interacts with FtsZ and promotes bundling of FtsZ protofilaments, with a reduction in FtsZ GTPase activity. This chain is Cell division protein ZapD, found in Nitrosomonas eutropha (strain DSM 101675 / C91 / Nm57).